We begin with the raw amino-acid sequence, 57 residues long: MSEFDAQRVAERIDIVLDILVAGDYHSAIHNLEILKAELLRQVAESTPDIPKAPWEI.

This sequence belongs to the UPF0509 family.

In Escherichia coli O127:H6 (strain E2348/69 / EPEC), this protein is UPF0509 protein YciZ.